A 113-amino-acid polypeptide reads, in one-letter code: Putative pterin-4-alpha-carbinolamine dehydratase (113 aa).

This sequence belongs to the pterin-4-alpha-carbinolamine dehydratase family.

The enzyme catalyses (4aS,6R)-4a-hydroxy-L-erythro-5,6,7,8-tetrahydrobiopterin = (6R)-L-erythro-6,7-dihydrobiopterin + H2O. The polypeptide is Putative pterin-4-alpha-carbinolamine dehydratase (Bordetella bronchiseptica (strain ATCC BAA-588 / NCTC 13252 / RB50) (Alcaligenes bronchisepticus)).